A 193-amino-acid polypeptide reads, in one-letter code: Potassium-transporting ATPase KdpC subunit (193 aa).

The helical transmembrane segment at 7–27 threads the bilayer; sequence PLVVLFVVLTAVTGLAYPAVM.

Belongs to the KdpC family. As to quaternary structure, the system is composed of three essential subunits: KdpA, KdpB and KdpC.

The protein resides in the cell inner membrane. Part of the high-affinity ATP-driven potassium transport (or Kdp) system, which catalyzes the hydrolysis of ATP coupled with the electrogenic transport of potassium into the cytoplasm. This subunit acts as a catalytic chaperone that increases the ATP-binding affinity of the ATP-hydrolyzing subunit KdpB by the formation of a transient KdpB/KdpC/ATP ternary complex. The chain is Potassium-transporting ATPase KdpC subunit from Burkholderia orbicola (strain MC0-3).